Consider the following 478-residue polypeptide: Ninja-family protein 7 (478 aa).

Disordered stretches follow at residues 1–247 (MDDD…LTPG), 336–374 (SFTA…EKKA), and 454–478 (DAPA…SAEN). Basic and acidic residues predominate over residues 23–35 (KARDAPLEPKAEP). The span at 169-179 (ISISTDDGSTG) shows a compositional bias: polar residues. Positions 180–189 (ENEDVAESEA) are enriched in acidic residues. Positions 233–242 (SFSGSESSSG) are enriched in low complexity. The span at 339-359 (AKDKADQTGTKQVDDGKKPRE) shows a compositional bias: basic and acidic residues.

It belongs to the Ninja family.

It localises to the nucleus. In Zea mays (Maize), this protein is Ninja-family protein 7.